The following is a 420-amino-acid chain: DNA repair protein NreA (420 aa).

The PIP motif signature appears at Gln413 to Ala420.

The protein belongs to the Nre family. As to quaternary structure, interacts with the DNA polymerase sliding clamp (PCNA) via the PIP (PCNA-interacting peptide) motif.

Its function is as follows. Involved in DNA damage repair. Works together with the UvrABC proteins in repairing DNA damage resulting from exposure to the DNA damaging agent mitomycin C (MMC). In Haloferax volcanii (strain ATCC 29605 / DSM 3757 / JCM 8879 / NBRC 14742 / NCIMB 2012 / VKM B-1768 / DS2) (Halobacterium volcanii), this protein is DNA repair protein NreA.